A 334-amino-acid chain; its full sequence is DNA-directed RNA polymerase subunit alpha (334 aa).

Positions 1–231 are alpha N-terminal domain (alpha-NTD); it reads MNMIKIEPYI…KQMSIFGVDL (231 aa). The interval 247–334 is alpha C-terminal domain (alpha-CTD); sequence ELKTLMIKID…NRKLAKLKSN (88 aa).

Belongs to the RNA polymerase alpha chain family. Homodimer. The RNAP catalytic core consists of 2 alpha, 1 beta/beta' and 1 omega subunit. When a sigma factor is associated with the core the holoenzyme is formed, which can initiate transcription.

The catalysed reaction is RNA(n) + a ribonucleoside 5'-triphosphate = RNA(n+1) + diphosphate. Its function is as follows. DNA-dependent RNA polymerase catalyzes the transcription of DNA into RNA using the four ribonucleoside triphosphates as substrates. In Helicobacter hepaticus (strain ATCC 51449 / 3B1), this protein is DNA-directed RNA polymerase subunit alpha.